The chain runs to 330 residues: Phosphate acyltransferase (330 aa).

Belongs to the PlsX family. In terms of assembly, homodimer. Probably interacts with PlsY.

The protein resides in the cytoplasm. The enzyme catalyses a fatty acyl-[ACP] + phosphate = an acyl phosphate + holo-[ACP]. It participates in lipid metabolism; phospholipid metabolism. Catalyzes the reversible formation of acyl-phosphate (acyl-PO(4)) from acyl-[acyl-carrier-protein] (acyl-ACP). This enzyme utilizes acyl-ACP as fatty acyl donor, but not acyl-CoA. The polypeptide is Phosphate acyltransferase (Bacillus mycoides (strain KBAB4) (Bacillus weihenstephanensis)).